The sequence spans 301 residues: Possible hemolysin C (301 aa).

CBS domains lie at 79–141 (MVPR…NFRL) and 144–201 (LIRK…IDDE).

The protein belongs to the UPF0053 family. Hemolysin C subfamily.

This Rickettsia bellii (strain RML369-C) protein is Possible hemolysin C (tlyC).